Here is a 33-residue protein sequence, read N- to C-terminus: Alpha-amanitin proprotein (33 aa).

The propeptide occupies 1–10 (MSDINATRLP). I11 is subject to (3R,4R)-4,5-dihydroxyisoleucine; in form alpha-amanitin. I11 is modified ((3R,4S)-4-hydroxyisoleucine; in form gamma-amanitin). A cross-link (cyclopeptide (Ile-Pro)) is located at residues 11–18 (IWGIGCNP). Positions 12 to 16 (WGIGC) form a cross-link, 2'-cysteinyl-6'-hydroxytryptophan sulfoxide (Trp-Cys). P18 is subject to 4-hydroxyproline. The propeptide occupies 19-33 (SVGDEVTALLASGEA).

It belongs to the MSDIN fungal toxin family. In terms of processing, processed by the macrocyclase-peptidase enzyme POPB to yield a toxic cyclic decapeptide. POPB first removes 10 residues from the N-terminus. Conformational trapping of the remaining peptide forces the enzyme to release this intermediate rather than proceed to macrocyclization. The enzyme rebinds the remaining peptide in a different conformation and catalyzes macrocyclization of the N-terminal 8 residues.

Functionally, major toxin belonging to the bicyclic octapeptides amatoxins that acts by binding non-competitively to RNA polymerase II and greatly slowing the elongation of transcripts from target promoters. The protein is Alpha-amanitin proprotein of Amanita rimosa.